The following is a 311-amino-acid chain: F-box protein At3g18320 (311 aa).

The 46-residue stretch at methionine 1–lysine 46 folds into the F-box domain.

The protein is F-box protein At3g18320 of Arabidopsis thaliana (Mouse-ear cress).